A 393-amino-acid chain; its full sequence is Formate-dependent phosphoribosylglycinamide formyltransferase (393 aa).

Residues 22–23 (EL) and Glu-82 each bind N(1)-(5-phospho-beta-D-ribosyl)glycinamide. Residues Arg-114, Lys-155, 160–165 (SSGKGQ), 195–198 (EGFI), and Glu-203 contribute to the ATP site. In terms of domain architecture, ATP-grasp spans 119-308 (RLAAEELGLP…EFALHARAIL (190 aa)). 2 residues coordinate Mg(2+): Glu-267 and Glu-279. Residues Asp-286, Lys-356, and 363–364 (RR) contribute to the N(1)-(5-phospho-beta-D-ribosyl)glycinamide site.

This sequence belongs to the PurK/PurT family. As to quaternary structure, homodimer.

The enzyme catalyses N(1)-(5-phospho-beta-D-ribosyl)glycinamide + formate + ATP = N(2)-formyl-N(1)-(5-phospho-beta-D-ribosyl)glycinamide + ADP + phosphate + H(+). The protein operates within purine metabolism; IMP biosynthesis via de novo pathway; N(2)-formyl-N(1)-(5-phospho-D-ribosyl)glycinamide from N(1)-(5-phospho-D-ribosyl)glycinamide (formate route): step 1/1. Involved in the de novo purine biosynthesis. Catalyzes the transfer of formate to 5-phospho-ribosyl-glycinamide (GAR), producing 5-phospho-ribosyl-N-formylglycinamide (FGAR). Formate is provided by PurU via hydrolysis of 10-formyl-tetrahydrofolate. In Pseudomonas aeruginosa (strain LESB58), this protein is Formate-dependent phosphoribosylglycinamide formyltransferase.